The following is a 325-amino-acid chain: Putative S-adenosyl-L-methionine-dependent methyltransferase MT0917 (325 aa).

Residues Asp-126 and 155–156 (DL) contribute to the S-adenosyl-L-methionine site.

The protein belongs to the UPF0677 family.

Its function is as follows. Exhibits S-adenosyl-L-methionine-dependent methyltransferase activity. The protein is Putative S-adenosyl-L-methionine-dependent methyltransferase MT0917 of Mycobacterium tuberculosis (strain CDC 1551 / Oshkosh).